An 862-amino-acid polypeptide reads, in one-letter code: DNA mismatch repair protein MutS (862 aa).

An ATP-binding site is contributed by 603–610 (GPNMSGKS).

It belongs to the DNA mismatch repair MutS family.

In terms of biological role, this protein is involved in the repair of mismatches in DNA. It is possible that it carries out the mismatch recognition step. This protein has a weak ATPase activity. The protein is DNA mismatch repair protein MutS of Bacillus velezensis (strain DSM 23117 / BGSC 10A6 / LMG 26770 / FZB42) (Bacillus amyloliquefaciens subsp. plantarum).